The following is a 36-amino-acid chain: Photosystem II reaction center protein Y (36 aa).

The Lumenal segment spans residues 1 to 4; it reads MDSR. A helical membrane pass occupies residues 5 to 23; that stretch reads LLVVLIPVLAAASWAVYNI. At 24–36 the chain is on the stromal side; sequence GRVALQQFRKMTS.

It belongs to the PsbY family. As to quaternary structure, PSII is composed of 1 copy each of membrane proteins PsbA, PsbB, PsbC, PsbD, PsbE, PsbF, PsbH, PsbI, PsbJ, PsbK, PsbL, PsbM, PsbT, PsbX, PsbY, PsbZ, Psb30/Ycf12, at least 3 peripheral proteins of the oxygen-evolving complex and a large number of cofactors. It forms dimeric complexes.

It localises to the plastid. It is found in the chloroplast thylakoid membrane. Its function is as follows. Loosely associated component of the core of photosystem II (PSII), it is not always seen in crystals. PSII is a light-driven water plastoquinone oxidoreductase, using light energy to abstract electrons from H(2)O, generating a proton gradient subsequently used for ATP formation. This Pyropia yezoensis (Susabi-nori) protein is Photosystem II reaction center protein Y.